Reading from the N-terminus, the 379-residue chain is F-box protein At5g18160 (379 aa).

The tract at residues 1 to 26 is disordered; the sequence is MDKQDEKKQGTTKSSSTLTTRCSHGN. The span at 11–26 shows a compositional bias: polar residues; the sequence is TTKSSSTLTTRCSHGN. Residues 28–74 enclose the F-box domain; the sequence is ISQSNSIPLDITIEILSRLPAKSIVRSRSVSKLWSSITTTPEFIKHR.

The chain is F-box protein At5g18160 from Arabidopsis thaliana (Mouse-ear cress).